A 490-amino-acid polypeptide reads, in one-letter code: 2-succinylbenzoate--CoA ligase (490 aa).

This sequence belongs to the ATP-dependent AMP-binding enzyme family. MenE subfamily.

It carries out the reaction 2-succinylbenzoate + ATP + CoA = 2-succinylbenzoyl-CoA + AMP + diphosphate. It participates in quinol/quinone metabolism; 1,4-dihydroxy-2-naphthoate biosynthesis; 1,4-dihydroxy-2-naphthoate from chorismate: step 5/7. The protein operates within quinol/quinone metabolism; menaquinone biosynthesis. In terms of biological role, converts 2-succinylbenzoate (OSB) to 2-succinylbenzoyl-CoA (OSB-CoA). The sequence is that of 2-succinylbenzoate--CoA ligase from Geobacillus kaustophilus (strain HTA426).